Reading from the N-terminus, the 242-residue chain is Uridylate kinase (242 aa).

Residue 12–15 coordinates ATP; that stretch reads KLSG. Residues 20–25 are involved in allosteric activation by GTP; sequence GQKGYG. G54 is a UMP binding site. ATP contacts are provided by G55 and R59. Residues D74 and 135 to 142 contribute to the UMP site; that span reads TGNPYFST. The ATP site is built by Q163, Y168, and D171.

This sequence belongs to the UMP kinase family. As to quaternary structure, homohexamer.

It localises to the cytoplasm. It catalyses the reaction UMP + ATP = UDP + ADP. It functions in the pathway pyrimidine metabolism; CTP biosynthesis via de novo pathway; UDP from UMP (UMPK route): step 1/1. Allosterically activated by GTP. Inhibited by UTP. Functionally, catalyzes the reversible phosphorylation of UMP to UDP. This chain is Uridylate kinase, found in Desulforamulus reducens (strain ATCC BAA-1160 / DSM 100696 / MI-1) (Desulfotomaculum reducens).